Here is a 227-residue protein sequence, read N- to C-terminus: Cytochrome c oxidase subunit 2 (227 aa).

Residues 1 to 14 (MAYPLQLGFQDATS) are Mitochondrial intermembrane-facing. The helical transmembrane segment at 15-45 (PIMEELLHFHDHTLMIVFLISSLVLYIISLM) threads the bilayer. Topologically, residues 46 to 59 (LTTKLTHTSTMDAQ) are mitochondrial matrix. Residues 60–87 (EVETIWTILPAIILILIALPSLRILYMM) traverse the membrane as a helical segment. Over 88 to 227 (DEINNPSLTI…HFEKWSTSML (140 aa)) the chain is Mitochondrial intermembrane. Residues histidine 161, cysteine 196, glutamate 198, cysteine 200, histidine 204, and methionine 207 each contribute to the Cu cation site. Glutamate 198 contributes to the Mg(2+) binding site.

The protein belongs to the cytochrome c oxidase subunit 2 family. Component of the cytochrome c oxidase (complex IV, CIV), a multisubunit enzyme composed of 14 subunits. The complex is composed of a catalytic core of 3 subunits MT-CO1, MT-CO2 and MT-CO3, encoded in the mitochondrial DNA, and 11 supernumerary subunits COX4I, COX5A, COX5B, COX6A, COX6B, COX6C, COX7A, COX7B, COX7C, COX8 and NDUFA4, which are encoded in the nuclear genome. The complex exists as a monomer or a dimer and forms supercomplexes (SCs) in the inner mitochondrial membrane with NADH-ubiquinone oxidoreductase (complex I, CI) and ubiquinol-cytochrome c oxidoreductase (cytochrome b-c1 complex, complex III, CIII), resulting in different assemblies (supercomplex SCI(1)III(2)IV(1) and megacomplex MCI(2)III(2)IV(2)). Found in a complex with TMEM177, COA6, COX18, COX20, SCO1 and SCO2. Interacts with TMEM177 in a COX20-dependent manner. Interacts with COX20. Interacts with COX16. Cu cation is required as a cofactor.

Its subcellular location is the mitochondrion inner membrane. The enzyme catalyses 4 Fe(II)-[cytochrome c] + O2 + 8 H(+)(in) = 4 Fe(III)-[cytochrome c] + 2 H2O + 4 H(+)(out). Component of the cytochrome c oxidase, the last enzyme in the mitochondrial electron transport chain which drives oxidative phosphorylation. The respiratory chain contains 3 multisubunit complexes succinate dehydrogenase (complex II, CII), ubiquinol-cytochrome c oxidoreductase (cytochrome b-c1 complex, complex III, CIII) and cytochrome c oxidase (complex IV, CIV), that cooperate to transfer electrons derived from NADH and succinate to molecular oxygen, creating an electrochemical gradient over the inner membrane that drives transmembrane transport and the ATP synthase. Cytochrome c oxidase is the component of the respiratory chain that catalyzes the reduction of oxygen to water. Electrons originating from reduced cytochrome c in the intermembrane space (IMS) are transferred via the dinuclear copper A center (CU(A)) of subunit 2 and heme A of subunit 1 to the active site in subunit 1, a binuclear center (BNC) formed by heme A3 and copper B (CU(B)). The BNC reduces molecular oxygen to 2 water molecules using 4 electrons from cytochrome c in the IMS and 4 protons from the mitochondrial matrix. The sequence is that of Cytochrome c oxidase subunit 2 (MT-CO2) from Rhinoceros unicornis (Greater Indian rhinoceros).